The chain runs to 158 residues: Probable deoxyuridine 5'-triphosphate nucleotidohydrolase (158 aa).

Belongs to the dUTPase family. Mg(2+) serves as cofactor.

The enzyme catalyses dUTP + H2O = dUMP + diphosphate + H(+). It functions in the pathway pyrimidine metabolism; dUMP biosynthesis; dUMP from dCTP (dUTP route): step 1/2. Functionally, this enzyme is involved in nucleotide metabolism: it produces dUMP, the immediate precursor of thymidine nucleotides and it decreases the intracellular concentration of dUTP so that uracil cannot be incorporated into DNA. It does probably not deaminate dCTP. The protein is Probable deoxyuridine 5'-triphosphate nucleotidohydrolase of Sulfolobus islandicus rod-shaped virus 1 (SIRV-1).